The sequence spans 245 residues: Aliphatic sulfonates import ATP-binding protein SsuB 1 (245 aa).

In terms of domain architecture, ABC transporter spans 9-227; the sequence is LDLVGIGHRY…HRGDAQLAAW (219 aa). Residue 41-48 coordinates ATP; it reads GPSGVGKS.

The protein belongs to the ABC transporter superfamily. Aliphatic sulfonates importer (TC 3.A.1.17.2) family. As to quaternary structure, the complex is composed of two ATP-binding proteins (SsuB), two transmembrane proteins (SsuC) and a solute-binding protein (SsuA).

The protein resides in the cell membrane. The enzyme catalyses ATP + H2O + aliphatic sulfonate-[sulfonate-binding protein]Side 1 = ADP + phosphate + aliphatic sulfonateSide 2 + [sulfonate-binding protein]Side 1.. Functionally, part of the ABC transporter complex SsuABC involved in aliphatic sulfonates import. Responsible for energy coupling to the transport system. The sequence is that of Aliphatic sulfonates import ATP-binding protein SsuB 1 from Rhodococcus jostii (strain RHA1).